Here is a 200-residue protein sequence, read N- to C-terminus: Putative glucose-6-phosphate isomerase 2 (200 aa).

The Fe cation site is built by His-92, His-94, Glu-101, and His-140.

Belongs to the archaeal-type GPI family. Homodimer. Fe cation is required as a cofactor.

Its subcellular location is the cytoplasm. It carries out the reaction alpha-D-glucose 6-phosphate = beta-D-fructose 6-phosphate. It participates in carbohydrate degradation; glycolysis; D-glyceraldehyde 3-phosphate and glycerone phosphate from D-glucose: step 2/4. This Rhizobium meliloti (strain 1021) (Ensifer meliloti) protein is Putative glucose-6-phosphate isomerase 2 (pgiA2).